The following is a 405-amino-acid chain: MAGVLGMILAGGEGSRLRPLTESRTKPAVPFGGSYRLIDFALNNFVNADLMRIYVLTQFKSQSLFQHMKKGWNVNGITDRFIDPVPAQMRTGKRWYEGTADAIYQNISFIESTDPEHVCIFGSDHIYKMDIRQMLDFHKKKKAALTVSALRMPAKDASGFGVIEVDEHGKMIGFEEKPSNPKCIPGQPGIALVSMGNYIFEAESLCKELIHDAALEDSSHDFGKDIIPKMFPEGNVYVYDFSTNHITGEKKEVYWRDVGTIESYWEAHMDLLKKDAPFSLYNRKWPLHTYYPPLPPATFSDSDNGRVQIIDSLVCGGSYIRGSRIEKSVLGFRSNIASACDISESILLGNVKVGKGCVLRRVIVDKGADIAPGTEIGVNLQEDKKKYHVSDEGIVVIPKGERVGY.

Alpha-D-glucose 1-phosphate-binding positions include tyrosine 96, glycine 161, 176–177, and serine 194; that span reads EK.

This sequence belongs to the bacterial/plant glucose-1-phosphate adenylyltransferase family. As to quaternary structure, homotetramer.

The catalysed reaction is alpha-D-glucose 1-phosphate + ATP + H(+) = ADP-alpha-D-glucose + diphosphate. Its pathway is glycan biosynthesis; glycogen biosynthesis. Functionally, involved in the biosynthesis of ADP-glucose, a building block required for the elongation reactions to produce glycogen. Catalyzes the reaction between ATP and alpha-D-glucose 1-phosphate (G1P) to produce pyrophosphate and ADP-Glc. This is Glucose-1-phosphate adenylyltransferase from Aliivibrio fischeri (strain MJ11) (Vibrio fischeri).